The chain runs to 508 residues: Abl interactor 1 (508 aa).

Alanine 2 bears the N-acetylalanine mark. Residues 18 to 79 (ALIESYQNLT…NNVLQLLDIQ (62 aa)) are required for binding to WASF1. The t-SNARE coiled-coil homology domain occupies 45–107 (KALEETKAYT…DIHKEKVARR (63 aa)). Position 53 is a phosphotyrosine (tyrosine 53). Disordered regions lie at residues 159 to 290 (KHGN…APPL), 306 to 375 (APGS…LTPQ), and 388 to 421 (NIAD…PVDY). Polar residues predominate over residues 161–175 (GNNQPARTGTLSRTN). Threonine 174 and threonine 178 each carry phosphothreonine. A phosphoserine mark is found at serine 183 and serine 187. Position 213 is a phosphotyrosine; by ABL1 (tyrosine 213). Phosphothreonine is present on threonine 215. A phosphoserine mark is found at serine 216, serine 222, and serine 225. Over residues 222–235 (SQHSPGRTASLNQR) the composition is skewed to polar residues. The segment covering 248 to 258 (SRENSGSSSIG) has biased composition (low complexity). The segment covering 278 to 290 (VPPPSGAPPAPPL) has biased composition (pro residues). The segment covering 307–322 (PGSQYGTMTRQISRHN) has biased composition (polar residues). Serine 319 and serine 323 each carry phosphoserine. Residues 337–347 (PSVTAQFSAQP) show a composition bias toward polar residues. Composition is skewed to pro residues over residues 393 to 403 (PTPPPPPPPDD) and 410 to 419 (SPPPPPPPPV). An SH3 domain is found at 446–505 (NYIEKVVAIYDYTKDKDDELSFMEGAIIYVIKKNDDGWYEGVCNRVTGLFPGNYVESIMH). Tyrosine 455 carries the post-translational modification Phosphotyrosine. Serine 466 is modified (phosphoserine). Position 507 is a phosphothreonine (threonine 507).

Belongs to the ABI family. Interacts with ABL1, ENAH, STX1A, SNAP25, VAMP2, EPS8, and through its N-terminus with WASF1. Part of a complex consisting of ABI1, STX1A and SNAP25. Part of a complex consisting of ABI1, EPS8 and SOS1. Interacts with SOS1, SOS2, GRB2, SPTA1 and the first SH3 domain of NCK1. Isoform 6 does not interact with NCK1. Component of the WAVE2 complex composed of ABI1, CYFIP1/SRA1, NCKAP1/NAP1 (NCKAP1l/HEM1 in hematopoietic cells) and WASF2/WAVE2. Interacts (via SH3 domain) with SHANK2 and SHANK3, but not SHANK1; the interaction is direct. Interacts with the heterodimer MYC:MAX; the interaction may enhance MYC:MAX transcriptional activity. Interacts with FNBP1L (via the SH3 domain), WASF2, and CDC42, but only in the presence of FNBP1L. As to quaternary structure, (Microbial infection) Interacts with human cytomegalovirus/HHV-5 protein UL135. Post-translationally, phosphorylated on tyrosine residues after serum stimulation or induction by v-Abl. Seems to be phosphorylated at Tyr-53 by ABL1, required for nuclear but not for synaptic localization. Widely expressed, with highest expression in brain.

The protein resides in the cytoplasm. It is found in the nucleus. The protein localises to the cell projection. It localises to the lamellipodium. Its subcellular location is the filopodium. The protein resides in the growth cone. It is found in the postsynaptic density. The protein localises to the cytoskeleton. Its function is as follows. May act in negative regulation of cell growth and transformation by interacting with nonreceptor tyrosine kinases ABL1 and/or ABL2. May play a role in regulation of EGF-induced Erk pathway activation. Involved in cytoskeletal reorganization and EGFR signaling. Together with EPS8 participates in transduction of signals from Ras to Rac. In vitro, a trimeric complex of ABI1, EPS8 and SOS1 exhibits Rac specific guanine nucleotide exchange factor (GEF) activity and ABI1 seems to act as an adapter in the complex. Regulates ABL1/c-Abl-mediated phosphorylation of ENAH. Recruits WASF1 to lamellipodia and there seems to regulate WASF1 protein level. In brain, seems to regulate the dendritic outgrowth and branching as well as to determine the shape and number of synaptic contacts of developing neurons. This is Abl interactor 1 from Homo sapiens (Human).